The following is a 115-amino-acid chain: Protein translation factor SUI1 homolog (115 aa).

It belongs to the SUI1 family. In terms of tissue distribution, expressed in all tissues examined.

In terms of biological role, probably involved in translation. The chain is Protein translation factor SUI1 homolog (GOS2) from Oryza sativa subsp. indica (Rice).